Consider the following 495-residue polypeptide: UDP-N-acetylmuramoyl-L-alanyl-D-glutamate--2,6-diaminopimelate ligase (495 aa).

UDP-N-acetyl-alpha-D-muramoyl-L-alanyl-D-glutamate contacts are provided by residues Leu-27, Ser-29, and 44-46 (HQA). 116 to 122 (GTNGKTT) is an ATP binding site. UDP-N-acetyl-alpha-D-muramoyl-L-alanyl-D-glutamate is bound by residues Asn-157, 158-159 (TT), Ser-185, Gln-191, and Arg-193. Lys-225 bears the N6-carboxylysine mark. Meso-2,6-diaminopimelate contacts are provided by residues Arg-390, 414 to 417 (DNPR), Gly-465, and Glu-469. Residues 414 to 417 (DNPR) carry the Meso-diaminopimelate recognition motif motif.

The protein belongs to the MurCDEF family. MurE subfamily. Mg(2+) serves as cofactor. Carboxylation is probably crucial for Mg(2+) binding and, consequently, for the gamma-phosphate positioning of ATP.

It localises to the cytoplasm. The catalysed reaction is UDP-N-acetyl-alpha-D-muramoyl-L-alanyl-D-glutamate + meso-2,6-diaminopimelate + ATP = UDP-N-acetyl-alpha-D-muramoyl-L-alanyl-gamma-D-glutamyl-meso-2,6-diaminopimelate + ADP + phosphate + H(+). It functions in the pathway cell wall biogenesis; peptidoglycan biosynthesis. Its activity is regulated as follows. Activated by potassium phosphate. Its function is as follows. Catalyzes the addition of meso-diaminopimelic acid to the nucleotide precursor UDP-N-acetylmuramoyl-L-alanyl-D-glutamate (UMAG) in the biosynthesis of bacterial cell-wall peptidoglycan. Is also able to use many meso-diaminopimelate analogs as substrates, although much less efficiently, but not L-lysine. This chain is UDP-N-acetylmuramoyl-L-alanyl-D-glutamate--2,6-diaminopimelate ligase (murE), found in Escherichia coli (strain K12).